We begin with the raw amino-acid sequence, 554 residues long: Glucose-6-phosphate isomerase (554 aa).

Glu-359 acts as the Proton donor in catalysis. Residues His-390 and Lys-518 contribute to the active site.

The protein belongs to the GPI family.

The protein localises to the cytoplasm. The enzyme catalyses alpha-D-glucose 6-phosphate = beta-D-fructose 6-phosphate. Its pathway is carbohydrate biosynthesis; gluconeogenesis. It functions in the pathway carbohydrate degradation; glycolysis; D-glyceraldehyde 3-phosphate and glycerone phosphate from D-glucose: step 2/4. Catalyzes the reversible isomerization of glucose-6-phosphate to fructose-6-phosphate. The chain is Glucose-6-phosphate isomerase from Pseudomonas fluorescens (strain ATCC BAA-477 / NRRL B-23932 / Pf-5).